The primary structure comprises 175 residues: Glycine-rich RNA-binding protein 1 (175 aa).

Residues 3–81 form the RRM domain; sequence AKVYVGNLSW…RRIRVNMANS (79 aa). Residues 114–175 are disordered; it reads GQPGGFQQPG…GYGGYNGQSQ (62 aa). Residues 122 to 131 show a composition bias toward low complexity; it reads PGGFQQQGGY. The span at 132–141 shows a compositional bias: gly residues; that stretch reads PQQGGYGGYQ. Residues 142–162 show a composition bias toward low complexity; it reads QPGFQPQQGGYGAPQQGYGAP. Over residues 163 to 175 the composition is skewed to gly residues; it reads QQGGYGGYNGQSQ.

It belongs to the glycine-rich RNA-binding protein family. Part of large ribonucleoprotein complexes (mRNPs) containing RNA-binding proteins RRM4 and PAB1, endosome-binding protein UPA1, core scaffold protein UPA2 and associated factor GRP1.

It localises to the endosome. Its function is as follows. Component of endosomal mRNA transport that regulates polarity of the infectious hyphae by transporting a broad spectrum of cargo mRNAs from the nucleus to cell poles. The polypeptide is Glycine-rich RNA-binding protein 1 (Mycosarcoma maydis (Corn smut fungus)).